Here is an 857-residue protein sequence, read N- to C-terminus: DNA gyrase subunit A (857 aa).

Residues 39 to 507 (LPDVRDGLKP…YEGDMSIEDL (469 aa)) enclose the Topo IIA-type catalytic domain. Catalysis depends on Tyr-127, which acts as the O-(5'-phospho-DNA)-tyrosine intermediate. A GyrA-box motif is present at residues 534-540 (QKRGGKG). The interval 825–857 (REAEEVDGDVAVDETAEGAATTGTDEGEAPSAE) is disordered. Positions 828–840 (EEVDGDVAVDETA) are enriched in acidic residues.

It belongs to the type II topoisomerase GyrA/ParC subunit family. As to quaternary structure, heterotetramer, composed of two GyrA and two GyrB chains. In the heterotetramer, GyrA contains the active site tyrosine that forms a transient covalent intermediate with DNA, while GyrB binds cofactors and catalyzes ATP hydrolysis.

The protein localises to the cytoplasm. It carries out the reaction ATP-dependent breakage, passage and rejoining of double-stranded DNA.. A type II topoisomerase that negatively supercoils closed circular double-stranded (ds) DNA in an ATP-dependent manner to modulate DNA topology and maintain chromosomes in an underwound state. Negative supercoiling favors strand separation, and DNA replication, transcription, recombination and repair, all of which involve strand separation. Also able to catalyze the interconversion of other topological isomers of dsDNA rings, including catenanes and knotted rings. Type II topoisomerases break and join 2 DNA strands simultaneously in an ATP-dependent manner. The sequence is that of DNA gyrase subunit A from Streptomyces coelicolor (strain ATCC BAA-471 / A3(2) / M145).